The chain runs to 562 residues: Sensor histidine kinase MtrB (562 aa).

Helical transmembrane passes span 42 to 62 and 213 to 233; these read VVAL…FVLT and GTMA…ALLV. One can recognise an HAMP domain in the interval 235–287; the sequence is RQVVVPVRSASRIAERFAEGHLSERMPVRGEDDMARLAVSFNDMAESLSRQIT. In terms of domain architecture, Histidine kinase spans 302–519; it reads DVSHELRTPL…CFRLTLPLVR (218 aa). Positions 526–562 are disordered; the sequence is SPLPMKPILQPSPQASTAGQQHGTQRQRLREHAERSR. Positions 536 to 551 are enriched in polar residues; the sequence is PSPQASTAGQQHGTQR. Over residues 553–562 the composition is skewed to basic and acidic residues; that stretch reads RLREHAERSR.

The protein resides in the cell membrane. The catalysed reaction is ATP + protein L-histidine = ADP + protein N-phospho-L-histidine.. Its function is as follows. Member of the two-component regulatory system MtrA/MtrB. Seems to function as a membrane-associated protein kinase that phosphorylates MtrA in response to environmental signals. The sequence is that of Sensor histidine kinase MtrB (mtrB) from Mycobacterium leprae (strain TN).